The chain runs to 171 residues: Nicotinamide-nucleotide adenylyltransferase (171 aa).

The protein belongs to the archaeal NMN adenylyltransferase family.

Its subcellular location is the cytoplasm. It catalyses the reaction beta-nicotinamide D-ribonucleotide + ATP + H(+) = diphosphate + NAD(+). The protein operates within cofactor biosynthesis; NAD(+) biosynthesis; NAD(+) from nicotinamide D-ribonucleotide: step 1/1. This chain is Nicotinamide-nucleotide adenylyltransferase, found in Methanococcus maripaludis (strain C6 / ATCC BAA-1332).